A 1308-amino-acid polypeptide reads, in one-letter code: D-lysergyl-peptide-synthetase subunit 2 (1308 aa).

Positions 261-658 (EWCRRTPSAV…CRKSTQVKLR (398 aa)) are adenylation (A) domain. The 69-residue stretch at 803–871 (IEEAFQRFFA…ELSELARHTK (69 aa)) folds into the Carrier domain. S835 carries the O-(pantetheine 4'-phosphoryl)serine modification. Positions 910–1299 (EDVYPCTPLQ…HAAPRTLIGD (390 aa)) are condensation (C) domain.

It belongs to the NRP synthetase family.

It participates in alkaloid biosynthesis; ergot alkaloid biosynthesis. D-lysergyl-peptide-synthetase subunit 2; part of the gene cluster that mediates the biosynthesis of fungal ergot alkaloid. DmaW catalyzes the first step of ergot alkaloid biosynthesis by condensing dimethylallyl diphosphate (DMAP) and tryptophan to form 4-dimethylallyl-L-tryptophan. The second step is catalyzed by the methyltransferase easF that methylates 4-dimethylallyl-L-tryptophan in the presence of S-adenosyl-L-methionine, resulting in the formation of 4-dimethylallyl-L-abrine. The catalase easC and the FAD-dependent oxidoreductase easE then transform 4-dimethylallyl-L-abrine to chanoclavine-I which is further oxidized by EasD in the presence of NAD(+), resulting in the formation of chanoclavine-I aldehyde. Agroclavine dehydrogenase easG then mediates the conversion of chanoclavine-I aldehyde to agroclavine via a non-enzymatic adduct reaction: the substrate is an iminium intermediate that is formed spontaneously from chanoclavine-I aldehyde in the presence of glutathione. The presence of easA is not required to complete this reaction. Further conversion of agroclavine to paspalic acid is a two-step process involving oxidation of agroclavine to elymoclavine and of elymoclavine to paspalic acid, the second step being performed by the elymoclavine oxidase cloA. Paspalic acid is then further converted to D-lysergic acid. Ergopeptines are assembled from D-lysergic acid and three different amino acids by the D-lysergyl-peptide-synthetases composed each of a monomudular and a trimodular nonribosomal peptide synthetase subunit. LpsB and lpsC encode the monomodular subunits responsible for D-lysergic acid activation and incorporation into the ergopeptine backbone. LpsA1 and A2 subunits encode the trimodular nonribosomal peptide synthetase assembling the tripeptide portion of ergopeptines. LpsA1 is responsible for formation of the major ergopeptine, ergotamine, and lpsA2 for alpha-ergocryptine, the minor ergopeptine of the total alkaloid mixture elaborated by C.purpurea. D-lysergyl-tripeptides are assembled by the nonribosomal peptide synthetases and released as N-(D-lysergyl-aminoacyl)-lactams. Cyclolization of the D-lysergyl-tripeptides is performed by the Fe(2+)/2-ketoglutarate-dependent dioxygenase easH which introduces a hydroxyl group into N-(D-lysergyl-aminoacyl)-lactam at alpha-C of the aminoacyl residue followed by spontaneous condensation with the terminal lactam carbonyl group. This Claviceps purpurea (Ergot fungus) protein is D-lysergyl-peptide-synthetase subunit 2.